Consider the following 69-residue polypeptide: uncharacterized protein (69 aa).

In terms of domain architecture, HTH cro/C1-type spans 10–64 (IRAFRKLKGYTQEGFAKALGISVSILGEIERGNRLPSAAIIQDAADVLNISADEL). A DNA-binding region (H-T-H motif) is located at residues 21 to 40 (QEGFAKALGISVSILGEIER).

This is an uncharacterized protein from Bacillus subtilis (strain 168).